The primary structure comprises 437 residues: UDP-N-acetylmuramate--L-alanine ligase (437 aa).

114-120 (GTHGKTS) lines the ATP pocket.

Belongs to the MurCDEF family.

It is found in the cytoplasm. It carries out the reaction UDP-N-acetyl-alpha-D-muramate + L-alanine + ATP = UDP-N-acetyl-alpha-D-muramoyl-L-alanine + ADP + phosphate + H(+). The protein operates within cell wall biogenesis; peptidoglycan biosynthesis. Cell wall formation. The chain is UDP-N-acetylmuramate--L-alanine ligase from Lactobacillus johnsonii (strain CNCM I-12250 / La1 / NCC 533).